The primary structure comprises 1546 residues: DNA-directed RNA polymerase subunit beta' (1546 aa).

Zn(2+) is bound by residues cysteine 57, cysteine 59, cysteine 72, and cysteine 75. Aspartate 756, aspartate 758, and aspartate 760 together coordinate Mg(2+). Residues cysteine 1130, cysteine 1211, cysteine 1218, and cysteine 1221 each contribute to the Zn(2+) site. A disordered region spans residues 1512–1546 (LEKYGEGSTSSDAVTGGQRYDDTRPGSSINPGYGD). Over residues 1536–1546 (PGSSINPGYGD) the composition is skewed to polar residues.

Belongs to the RNA polymerase beta' chain family. The RNAP catalytic core consists of 2 alpha, 1 beta, 1 beta' and 1 omega subunit. When a sigma factor is associated with the core the holoenzyme is formed, which can initiate transcription. Mg(2+) serves as cofactor. It depends on Zn(2+) as a cofactor.

It catalyses the reaction RNA(n) + a ribonucleoside 5'-triphosphate = RNA(n+1) + diphosphate. Functionally, DNA-dependent RNA polymerase catalyzes the transcription of DNA into RNA using the four ribonucleoside triphosphates as substrates. The sequence is that of DNA-directed RNA polymerase subunit beta' from Deinococcus radiodurans (strain ATCC 13939 / DSM 20539 / JCM 16871 / CCUG 27074 / LMG 4051 / NBRC 15346 / NCIMB 9279 / VKM B-1422 / R1).